The chain runs to 383 residues: Cytochrome b (383 aa).

Helical transmembrane passes span 31–51 (FGSLAGIMLVVQILTGIFLAM), 75–97 (WLMRYTHANGASFFFIVVYVHIF), 112–132 (LWCSGVIIFILMMATAFMGYV), and 178–198 (FFSLHFTFPFVIVGAVLIHLI). The heme b site is built by H81 and H95. Heme b is bound by residues H182 and H196. H201 is an a ubiquinone binding site. The next 4 helical transmembrane spans lie at 224-244 (FYTKDLFGLMVLFLVFFIFIF), 288-308 (IGGVIAMFGSLIVLLTIPFTN), 320-340 (IFKVCYWLLVVAFLLLGWVGQ), and 347-367 (YTEIGIISMIYYFFFFIIIIP).

This sequence belongs to the cytochrome b family. Fungal cytochrome b-c1 complex contains 10 subunits; 3 respiratory subunits, 2 core proteins and 5 low-molecular weight proteins. Cytochrome b-c1 complex is a homodimer. It depends on heme b as a cofactor.

It is found in the mitochondrion inner membrane. Its function is as follows. Component of the ubiquinol-cytochrome c reductase complex (complex III or cytochrome b-c1 complex) that is part of the mitochondrial respiratory chain. The b-c1 complex mediates electron transfer from ubiquinol to cytochrome c. Contributes to the generation of a proton gradient across the mitochondrial membrane that is then used for ATP synthesis. This Phytophthora megasperma (Potato pink rot fungus) protein is Cytochrome b (cob).